Reading from the N-terminus, the 588-residue chain is Thioredoxin domain-containing protein 3 (588 aa).

One can recognise a Thioredoxin domain in the interval 2-119 (ASKKREVQLQ…VINLIDEERK (118 aa)). Cys39 and Cys42 are disulfide-bonded. NDK regions lie at residues 157–257 (IAII…DQPE), 315–455 (LEKT…STLG), and 456–588 (LIKP…PEEN). The segment at 230–261 (GSKHNPPSEETEPQTDTEPNERSEDQPEVEAQ) is disordered.

It in the C-terminal section; belongs to the NDK family. In terms of assembly, monomer. Testis-specific. Expressed only in primary spermatocytes and round spermatids.

The protein localises to the cytoplasm. Probably required during the final stages of sperm tail maturation in the testis and/or epididymis, where extensive disulfide bonding of fibrous sheath (FS) proteins occurs. In vitro, it has neither nucleoside diphosphate kinase (NDPK) activity nor reducing activity on disulfide bonds. Exhibits a 3'-5' exonuclease activity with a preference for single-stranded DNA, suggesting roles in DNA proofreading and repair. This chain is Thioredoxin domain-containing protein 3, found in Homo sapiens (Human).